A 181-amino-acid chain; its full sequence is MNMKNIFLGFLSQIRSILMIFSNIFSFRETRLYPDEPLNLSLRYRGRIILTRNSNGSERCVACNLCSAVCPVNCISLKKSEEKNGRWYAKSFQINLSRCIFCGLCEEACPTMAIQLTPDIELSEFKRKELLYKKKNLLFSGPGKFSKYDFYSISGVNTTYDLKKNLSKKISNCVDVTDLLP.

4Fe-4S ferredoxin-type domains lie at 51 to 80 (TRNS…LKKS) and 90 to 119 (KSFQ…LTPD). 8 residues coordinate [4Fe-4S] cluster: C60, C63, C66, C70, C99, C102, C105, and C109.

Belongs to the complex I 23 kDa subunit family. As to quaternary structure, NDH-1 is composed of 13 different subunits. Subunits NuoA, H, J, K, L, M, N constitute the membrane sector of the complex. It depends on [4Fe-4S] cluster as a cofactor.

The protein resides in the cell membrane. The catalysed reaction is a quinone + NADH + 5 H(+)(in) = a quinol + NAD(+) + 4 H(+)(out). Its function is as follows. NDH-1 shuttles electrons from NADH, via FMN and iron-sulfur (Fe-S) centers, to quinones in the respiratory chain. The immediate electron acceptor for the enzyme in this species is believed to be ubiquinone. Couples the redox reaction to proton translocation (for every two electrons transferred, four hydrogen ions are translocated across the cytoplasmic membrane), and thus conserves the redox energy in a proton gradient. The sequence is that of NADH-quinone oxidoreductase subunit I from Buchnera aphidicola subsp. Cinara cedri (strain Cc).